A 277-amino-acid chain; its full sequence is Large ribosomal subunit protein uL2 (277 aa).

Residues 222 to 277 (GVAMNPVDHPHGGGEGRTSGGRHPVSPWGKSTKGKRTRSNKATDKFIMHTRHQRKK) form a disordered region.

The protein belongs to the universal ribosomal protein uL2 family. As to quaternary structure, part of the 50S ribosomal subunit. Forms a bridge to the 30S subunit in the 70S ribosome.

Functionally, one of the primary rRNA binding proteins. Required for association of the 30S and 50S subunits to form the 70S ribosome, for tRNA binding and peptide bond formation. It has been suggested to have peptidyltransferase activity; this is somewhat controversial. Makes several contacts with the 16S rRNA in the 70S ribosome. This Bartonella quintana (strain Toulouse) (Rochalimaea quintana) protein is Large ribosomal subunit protein uL2.